We begin with the raw amino-acid sequence, 207 residues long: V-type ATP synthase subunit D (207 aa).

The protein belongs to the V-ATPase D subunit family.

Produces ATP from ADP in the presence of a proton gradient across the membrane. This is V-type ATP synthase subunit D from Streptococcus gordonii (strain Challis / ATCC 35105 / BCRC 15272 / CH1 / DL1 / V288).